The primary structure comprises 205 residues: High frequency lysogenization protein HflD homolog (205 aa).

This sequence belongs to the HflD family.

The protein resides in the cytoplasm. It is found in the cell inner membrane. This Hahella chejuensis (strain KCTC 2396) protein is High frequency lysogenization protein HflD homolog.